Reading from the N-terminus, the 1726-residue chain is Transcription elongation factor SPT6 (1726 aa).

3 stretches are compositionally biased toward acidic residues: residues Met-1–Glu-14, Glu-32–Asp-49, and Asn-59–Asp-80. Residues Met-1 to Lys-197 are disordered. N-acetylserine is present on Ser-2. An interaction with IWS1 region spans residues Ser-2–Ser-485. The interaction with PAAF1 stretch occupies residues Ser-2–Leu-916. A coiled-coil region spans residues Asp-3–Arg-51. A phosphoserine mark is found at Ser-7 and Ser-12. Phosphoserine is present on residues Ser-73, Ser-78, and Ser-91. A compositionally biased stretch (acidic residues) spans Arg-95–Glu-105. The span at Lys-111–Lys-122 shows a compositional bias: basic residues. At Ser-125 the chain carries Phosphoserine. Composition is skewed to acidic residues over residues Asp-126 to Gly-136, Phe-150 to Glu-160, and Pro-169 to Gly-190. Ser-267 is modified (phosphoserine). The interval Ala-317–Tyr-1300 is interaction with KDM6A. The disordered stretch occupies residues Leu-489–Arg-520. Over residues Asp-495–Glu-509 the composition is skewed to acidic residues. Residues Gln-510–Arg-520 are compositionally biased toward basic and acidic residues. Lys-743 bears the N6-acetyllysine mark. The region spanning Trp-1213–Arg-1282 is the S1 motif domain. Residues Tyr-1325–Tyr-1431 enclose the SH2 domain. At Tyr-1515 the chain carries Phosphotyrosine. Phosphothreonine is present on Thr-1523. Position 1526 is a phosphoserine (Ser-1526). Phosphothreonine is present on residues Thr-1530 and Thr-1532. Ser-1535 is modified (phosphoserine). Thr-1539 is modified (phosphothreonine). The interaction with histone H2B and H3 stretch occupies residues Pro-1633–Arg-1726. The interval His-1636–Arg-1726 is disordered. The span at Gln-1639–Pro-1664 shows a compositional bias: low complexity. At Lys-1676 the chain carries N6-acetyllysine. Thr-1697 bears the Phosphothreonine mark. Residues Ser-1701 and Ser-1703 each carry the phosphoserine modification. Residues Thr-1709 and Thr-1718 each carry the phosphothreonine modification.

Belongs to the SPT6 family. In terms of assembly, interacts with RNA polymerase II and the DRB sensitivity-inducing factor complex (DSIF complex), which is composed of SUPT5H and SUPT4H1 or SUPT4H2. Interacts with PAAF1. Interacts with histone H2B and H3. Interacts (via SH2 domain) with POLR2A phosphorylated at 'Ser-2'. Interacts (via SH2 domain) with SETD1A. Interacts with IWS1, KDM6A and AICDA. Interacts with WDR43. In terms of processing, dephosphorylated at Ser-1530 by the PNUTS-PP1 complex during RNA polymerase II transcription pause-release. Ubiquitously expressed.

It is found in the nucleus. Its function is as follows. Histone H3-H4 chaperone that plays a key role in the regulation of transcription elongation and mRNA processing. Enhances the transcription elongation by RNA polymerase II (RNAPII) and is also required for the efficient activation of transcriptional elongation by the HIV-1 nuclear transcriptional activator, Tat. Besides chaperoning histones in transcription, acts to transport and splice mRNA by forming a complex with IWS1 and the C-terminal domain (CTD) of the RNAPII subunit RPB1 (POLR2A). The SUPT6H:IWS1:CTD complex recruits mRNA export factors (ALYREF/THOC4, EXOSC10) as well as histone modifying enzymes (such as SETD2), to ensure proper mRNA splicing, efficient mRNA export and elongation-coupled H3K36 methylation, a signature chromatin mark of active transcription. SUPT6H via its association with SETD1A, regulates both class-switch recombination and somatic hypermutation through formation of H3K4me3 epigenetic marks on activation-induced cytidine deaminase (AICDA) target loci. Promotes the activation of the myogenic gene program by entailing erasure of the repressive H3K27me3 epigenetic mark through stabilization of the chromatin interaction of the H3K27 demethylase KDM6A. The protein is Transcription elongation factor SPT6 (Supt6h) of Mus musculus (Mouse).